A 1275-amino-acid polypeptide reads, in one-letter code: Probable Rho-type GTPase-activating protein 2 (1275 aa).

Disordered regions lie at residues 118–146 (KYESTDSFPSSQPSRANSPQSDSYSSPYE), 213–238 (NTKRSHRSSEEPGASSPVTSPILKDS), 280–306 (SSFRRPITKPTPFNSDSNISIDPKDNN), and 335–365 (SSPRRKSISIVKPHGISSPKHSTNNLSSKSG). Positions 122–143 (TDSFPSSQPSRANSPQSDSYSS) are enriched in polar residues. Composition is skewed to polar residues over residues 290-299 (TPFNSDSNIS) and 353-364 (PKHSTNNLSSKS). Ser388 carries the phosphoserine modification. Disordered regions lie at residues 390-466 (IIEN…RSSF) and 539-561 (FSKSKSHNHHPSSQVEKSTSNSK). Polar residues-rich tracts occupy residues 450–466 (SLSLQKTGSSDTRRSSF) and 552–561 (QVEKSTSNSK). A PH domain is found at 719–836 (HAQKEGVLLK…WLRAILRQVP (118 aa)). The segment covering 957-971 (ADTRRNQDAPEKHVP) has biased composition (basic and acidic residues). 2 disordered regions span residues 957–988 (ADTRRNQDAPEKHVPVIEIQSSRPSLEKTDQS) and 1254–1275 (NGAQNESDSDVSDDNGEDNEFF). The region spanning 1065–1275 (LPLNEAVNIS…DDNGEDNEFF (211 aa)) is the Rho-GAP domain. Acidic residues predominate over residues 1260 to 1275 (SDSDVSDDNGEDNEFF).

The protein resides in the nucleus. Its function is as follows. GTPase-activating protein for Rho-type proteins. This chain is Probable Rho-type GTPase-activating protein 2 (rga2), found in Schizosaccharomyces pombe (strain 972 / ATCC 24843) (Fission yeast).